A 206-amino-acid polypeptide reads, in one-letter code: Protein GrpE (206 aa).

The span at 1-15 (MTDSNGQKDNNQDQA) shows a compositional bias: polar residues. The tract at residues 1–38 (MTDSNGQKDNNQDQAQPADPVVSKPYIMPDDPEEGTNE) is disordered.

This sequence belongs to the GrpE family. As to quaternary structure, homodimer.

It localises to the cytoplasm. Its function is as follows. Participates actively in the response to hyperosmotic and heat shock by preventing the aggregation of stress-denatured proteins, in association with DnaK and GrpE. It is the nucleotide exchange factor for DnaK and may function as a thermosensor. Unfolded proteins bind initially to DnaJ; upon interaction with the DnaJ-bound protein, DnaK hydrolyzes its bound ATP, resulting in the formation of a stable complex. GrpE releases ADP from DnaK; ATP binding to DnaK triggers the release of the substrate protein, thus completing the reaction cycle. Several rounds of ATP-dependent interactions between DnaJ, DnaK and GrpE are required for fully efficient folding. This chain is Protein GrpE, found in Rhodopseudomonas palustris (strain BisB5).